Here is a 389-residue protein sequence, read N- to C-terminus: AIAAVITFLILFTIFGNALVILAVLTSRSLRAPQNLFLVSLAAADILVATLIIPFSLANELLGYWYFWRTWCEVYLALDVLFCTSSIVHLCAISLDRYWAVSRALEYNSKRTPRRIKCIILTVWLIAAAISLPPLIYKGDQGPQPRGRPQCMLNQEAWYILSSSIGSFFAPCLIMILVYLRIYLIAKRSNRRGPRAKGAPGEGESKQPHPLTAGPLALANPPTLATSLAVDGEANGHSKLTGEKERETSEDPGTPTLQRSWPVLPSSGQSQKKGVCGASPEEEAEGEEEGSRPLSVPASPASACGPHLQQPQGSQVLATLRGQVLLGRGVGAAGGQWWRRRAQLTREKRFTFVLTVVIGVFVLCWFPFFFSYSLGAICPQHCKVPHGLF.

A helical membrane pass occupies residues 1–25; sequence AIAAVITFLILFTIFGNALVILAVL. Over 26–36 the chain is Cytoplasmic; the sequence is TSRSLRAPQNL. The chain crosses the membrane as a helical span at residues 37 to 62; it reads FLVSLAAADILVATLIIPFSLANELL. Residues 63–72 are Extracellular-facing; the sequence is GYWYFWRTWC. A disulfide bridge connects residues C72 and C151. A helical membrane pass occupies residues 73–95; the sequence is EVYLALDVLFCTSSIVHLCAISL. Residues 96-117 are Cytoplasmic-facing; it reads DRYWAVSRALEYNSKRTPRRIK. Residues 118-140 traverse the membrane as a helical segment; it reads CIILTVWLIAAAISLPPLIYKGD. Topologically, residues 141–156 are extracellular; the sequence is QGPQPRGRPQCMLNQE. A helical membrane pass occupies residues 157-180; sequence AWYILSSSIGSFFAPCLIMILVYL. Topologically, residues 181–353 are cytoplasmic; that stretch reads RIYLIAKRSN…LTREKRFTFV (173 aa). 2 disordered regions span residues 192-218 and 231-310; these read RGPRAKGAPGEGESKQPHPLTAGPLAL and DGEA…HLQQ. Residues 234-249 are compositionally biased toward basic and acidic residues; the sequence is ANGHSKLTGEKERETS. A helical membrane pass occupies residues 354 to 377; sequence LTVVIGVFVLCWFPFFFSYSLGAI. The Extracellular segment spans residues 378-386; that stretch reads CPQHCKVPH. A helical membrane pass occupies residues 387 to 389; the sequence is GLF.

Belongs to the G-protein coupled receptor 1 family. Adrenergic receptor subfamily. ADRA2B sub-subfamily. As to quaternary structure, interacts with RAB26. Interacts with PPP1R9B.

Its subcellular location is the cell membrane. In terms of biological role, alpha-2 adrenergic receptors mediate the catecholamine-induced inhibition of adenylate cyclase through the action of G proteins. This chain is Alpha-2B adrenergic receptor (ADRA2B), found in Procavia capensis habessinica (Abyssinian hyrax).